The primary structure comprises 73 residues: MERKTLASLCFFLIVLLAAQVVAQIVPCKTRNRNFKSACIAVSGDNEECDHDCRRVGGWYGGSCKNQKCVCDC.

A signal peptide spans 1-23 (MERKTLASLCFFLIVLLAAQVVA). Intrachain disulfides connect cysteine 39-cysteine 64, cysteine 49-cysteine 71, and cysteine 53-cysteine 73.

As to expression, expressed in nodules, but not in leaves, stems, flowers and roots. In developing nodules, expressed close to the infection threads.

The protein localises to the secreted. Its function is as follows. Nodulation-related protein probably involved in the infection process. The chain is Nodulin-1 (N1) from Medicago truncatula (Barrel medic).